The chain runs to 294 residues: Phosphatidylinositol transfer protein SFH5 (294 aa).

A CRAL-TRIO domain is found at 100-266; the sequence is HNTELQNVGI…GYGGKDKKNN (167 aa). Heme contacts are provided by Tyr-128, Arg-148, His-173, Tyr-175, and Lys-209.

Belongs to the SFH5 family. It depends on heme b as a cofactor.

The protein resides in the cytoplasm. Its subcellular location is the endoplasmic reticulum membrane. The protein localises to the microsome membrane. It catalyses the reaction a 1,2-diacyl-sn-glycero-3-phospho-(1D-myo-inositol)(in) = a 1,2-diacyl-sn-glycero-3-phospho-(1D-myo-inositol)(out). Its function is as follows. Non-classical phosphatidylinositol (PtdIns) transfer protein (PITP), which exhibits PtdIns-binding/transfer activity in the absence of detectable PtdCho-binding/transfer activity. Regulates PtdIns(4,5)P2 homeostasis at the plasma membrane. Heme-binding protein that may play a role in organic oxidant-induced stress responses. This is Phosphatidylinositol transfer protein SFH5 (SFH5) from Saccharomyces cerevisiae (strain YJM789) (Baker's yeast).